Reading from the N-terminus, the 335-residue chain is Glycerol-3-phosphate dehydrogenase [NAD(P)+] (335 aa).

Residues W12 and K106 each coordinate NADPH. Residues K106, G136, and S138 each contribute to the sn-glycerol 3-phosphate site. An NADPH-binding site is contributed by A140. K191, D244, S254, R255, and N256 together coordinate sn-glycerol 3-phosphate. The active-site Proton acceptor is K191. R255 provides a ligand contact to NADPH. Positions 279 and 281 each coordinate NADPH.

Belongs to the NAD-dependent glycerol-3-phosphate dehydrogenase family.

The protein localises to the cytoplasm. It catalyses the reaction sn-glycerol 3-phosphate + NAD(+) = dihydroxyacetone phosphate + NADH + H(+). The catalysed reaction is sn-glycerol 3-phosphate + NADP(+) = dihydroxyacetone phosphate + NADPH + H(+). It functions in the pathway membrane lipid metabolism; glycerophospholipid metabolism. In terms of biological role, catalyzes the reduction of the glycolytic intermediate dihydroxyacetone phosphate (DHAP) to sn-glycerol 3-phosphate (G3P), the key precursor for phospholipid synthesis. This chain is Glycerol-3-phosphate dehydrogenase [NAD(P)+], found in Fusobacterium nucleatum subsp. nucleatum (strain ATCC 25586 / DSM 15643 / BCRC 10681 / CIP 101130 / JCM 8532 / KCTC 2640 / LMG 13131 / VPI 4355).